Consider the following 279-residue polypeptide: Very long chain fatty acid elongase 1 (279 aa).

An N-acetylmethionine modification is found at Met-1. A run of 7 helical transmembrane segments spans residues Pro-23–Leu-43, Phe-61–Leu-81, Val-110–Leu-130, Val-137–Trp-154, Val-176–Trp-196, Met-201–Phe-221, and Val-231–Trp-251. The Di-lysine motif signature appears at Lys-275–Asn-279.

It belongs to the ELO family. ELOVL1 subfamily. As to quaternary structure, interacts with LASS2 and HSD17B12. Interacts with TECR. As to expression, ubiquitous.

The protein localises to the endoplasmic reticulum membrane. The catalysed reaction is a very-long-chain acyl-CoA + malonyl-CoA + H(+) = a very-long-chain 3-oxoacyl-CoA + CO2 + CoA. It carries out the reaction eicosanoyl-CoA + malonyl-CoA + H(+) = 3-oxodocosanoyl-CoA + CO2 + CoA. It catalyses the reaction (11Z)-eicosenoyl-CoA + malonyl-CoA + H(+) = 3-oxo-(13Z)-docosenoyl-CoA + CO2 + CoA. The enzyme catalyses docosanoyl-CoA + malonyl-CoA + H(+) = 3-oxotetracosanoyl-CoA + CO2 + CoA. The catalysed reaction is (13Z)-docosenoyl-CoA + malonyl-CoA + H(+) = 3-oxo-(15Z)-tetracosenoyl-CoA + CO2 + CoA. It carries out the reaction tetracosanoyl-CoA + malonyl-CoA + H(+) = 3-oxohexacosanoyl-CoA + CO2 + CoA. It catalyses the reaction hexacosanoyl-CoA + malonyl-CoA + H(+) = 3-oxooctacosanyol-CoA + CO2 + CoA. The enzyme catalyses octadecanoyl-CoA + malonyl-CoA + H(+) = 3-oxoeicosanoyl-CoA + CO2 + CoA. Its pathway is lipid metabolism; fatty acid biosynthesis. Its function is as follows. Catalyzes the first and rate-limiting reaction of the four reactions that constitute the long-chain fatty acids elongation cycle. This endoplasmic reticulum-bound enzymatic process allows the addition of 2 carbons to the chain of long- and very long-chain fatty acids (VLCFAs) per cycle. Condensing enzyme that exhibits activity toward saturated and monounsaturated acyl-CoA substrates, with the highest activity towards C22:0 acyl-CoA. May participate in the production of both saturated and monounsaturated VLCFAs of different chain lengths that are involved in multiple biological processes as precursors of membrane lipids and lipid mediators. Important for saturated C24:0 and monounsaturated C24:1 sphingolipid synthesis. Indirectly inhibits RPE65 via production of VLCFAs. The protein is Very long chain fatty acid elongase 1 of Homo sapiens (Human).